Consider the following 188-residue polypeptide: dITP/XTP pyrophosphatase (188 aa).

Substrate is bound at residue 7–12 (TGNIGK). Mg(2+)-binding residues include glutamate 36 and aspartate 65. Aspartate 65 acts as the Proton acceptor in catalysis. Substrate-binding positions include serine 66, 141–144 (FGYD), lysine 164, and 169–170 (HR).

The protein belongs to the HAM1 NTPase family. As to quaternary structure, homodimer. Mg(2+) serves as cofactor.

It catalyses the reaction XTP + H2O = XMP + diphosphate + H(+). It carries out the reaction dITP + H2O = dIMP + diphosphate + H(+). The enzyme catalyses ITP + H2O = IMP + diphosphate + H(+). Pyrophosphatase that catalyzes the hydrolysis of nucleoside triphosphates to their monophosphate derivatives, with a high preference for the non-canonical purine nucleotides XTP (xanthosine triphosphate), dITP (deoxyinosine triphosphate) and ITP. Seems to function as a house-cleaning enzyme that removes non-canonical purine nucleotides from the nucleotide pool, thus preventing their incorporation into DNA/RNA and avoiding chromosomal lesions. This chain is dITP/XTP pyrophosphatase, found in Methanopyrus kandleri (strain AV19 / DSM 6324 / JCM 9639 / NBRC 100938).